Here is a 220-residue protein sequence, read N- to C-terminus: Probable septum site-determining protein MinC (220 aa).

The protein belongs to the MinC family. In terms of assembly, interacts with MinD and FtsZ.

Functionally, cell division inhibitor that blocks the formation of polar Z ring septums. Rapidly oscillates between the poles of the cell to destabilize FtsZ filaments that have formed before they mature into polar Z rings. Prevents FtsZ polymerization. The protein is Probable septum site-determining protein MinC of Vibrio atlanticus (strain LGP32) (Vibrio splendidus (strain Mel32)).